We begin with the raw amino-acid sequence, 283 residues long: Pantothenate synthetase (283 aa).

30–37 (MGYYHSGH) provides a ligand contact to ATP. His37 (proton donor) is an active-site residue. Residue Gln61 coordinates (R)-pantoate. Gln61 contacts beta-alanine. An ATP-binding site is contributed by 147-150 (GQKD). Gln153 contacts (R)-pantoate. ATP-binding positions include Val176 and 184-187 (MSSR).

The protein belongs to the pantothenate synthetase family. Homodimer.

The protein localises to the cytoplasm. It catalyses the reaction (R)-pantoate + beta-alanine + ATP = (R)-pantothenate + AMP + diphosphate + H(+). The protein operates within cofactor biosynthesis; (R)-pantothenate biosynthesis; (R)-pantothenate from (R)-pantoate and beta-alanine: step 1/1. In terms of biological role, catalyzes the condensation of pantoate with beta-alanine in an ATP-dependent reaction via a pantoyl-adenylate intermediate. The protein is Pantothenate synthetase of Nitratidesulfovibrio vulgaris (strain DSM 19637 / Miyazaki F) (Desulfovibrio vulgaris).